The sequence spans 1149 residues: MGIRFIYGRAGTGKTYFCLREIKEKINDGNSHPLILLVPEQFTFEAEKYLLETVEKDRKMRAQVLSFKTLANRVFTEVGGLTRQHVNSCGRSMVIYKIMEDLKENLKVYYKASRQQGFIKKISEVITEFKRFEVTPEKLMDTAESIQKEGLREKLRELSLIYGKFDELLHQKYIDEEDALTLLAEKLEYSEQFKGAEFWIDGFTGFTPKQYKVLEKLLKKAARVSVTLTMDTSKDSIDNTDLFYTTKKTEDKLLKICYENNISYEKPVDLNEGVPKRFEKNEEMAFLEKHLFSYPYKIYSKDTKNISLFKAVNVYSEVEETAREIIRLVRDENLRYSDIVVTARDLKRYHKLIKTIFSHYGIPHFIDLKLDIKNNPIIVYITSLFEIYLKNWSYESVFRHLKTGFTNLNKEDISFLENYVLANGIKGGKWKEEWKYSFRNRLDKLFDDQDEKEALEKVNTIKNGISEPLNKFYKDFSNANTVREACEILYNFLVERDIPQRIENLIREFKENKEFEIANQYSQIWDIVVDVLDQMVEVMGEEKINIDLFSKILDIGFEAYQIGSIPPALDEVLVTSVDRMKSHNAKALFVIGANDGIFPASSFEEGILTDEDRQILTSYEVELDRDTKAKVFEEQFLVYTALTSTSKFLRISYPIADHEGRSLRPSIIISRFKRIFPQITQFSNVIEMDTDEENLHRVSSPDPTFNEMIKSFKEWDIKDKINSLWLDVYNWYSNKEVWRKRIEKVLEGFNYSNQVRVIPSAKIKRLYKDEINFSVSRLEKYAACPFAYFVQYGLKAKERKIYSFDPPDLGIFMHNVLNEVSKALEKEDKTWEDLDREYCDEVVNIVVDNMLKGVSEHILKSSPRYEYLSKRLTRVLSNAVWVISEHIKRSSFIPSGHEVAFGENQMYPPIKIILSNGEEINLIGRIDRVDVFEKGEESYIRIIDYKSGNKELKLEDVFYGLELQLLIYLDAILESADKENTDIKPAGIFYFRIDDPIVKADKDITDEELQKEILKKLRLDGLVLKDAEIIKEMDKSINGTSYIIPASINKDGTIGKKTKGATKEQFELLRKHVKNMIKDLAEQMINGNISITPYRKGKETACKYCPYSSVCKFETNFEGNKYMFIKEQKEEEIWNMLQKEVNKDGDKVD.

8–15 (GRAGTGKT) is a binding site for ATP. 4 residues coordinate [4Fe-4S] cluster: C784, C1102, C1105, and C1111.

This sequence belongs to the helicase family. AddB/RexB type 1 subfamily. As to quaternary structure, heterodimer of AddA and AddB. Requires Mg(2+) as cofactor. [4Fe-4S] cluster is required as a cofactor.

The heterodimer acts as both an ATP-dependent DNA helicase and an ATP-dependent, dual-direction single-stranded exonuclease. Recognizes the chi site generating a DNA molecule suitable for the initiation of homologous recombination. The AddB subunit has 5' -&gt; 3' nuclease activity but not helicase activity. This is ATP-dependent helicase/deoxyribonuclease subunit B from Thermoanaerobacter pseudethanolicus (strain ATCC 33223 / 39E) (Clostridium thermohydrosulfuricum).